The primary structure comprises 311 residues: Malate dehydrogenase (311 aa).

NAD(+) contacts are provided by residues 7 to 13 (GAAGGIG) and Asp-34. Positions 81 and 87 each coordinate substrate. Residues Asn-94 and 117–119 (ITN) each bind NAD(+). Substrate is bound by residues Asn-119 and Arg-153. His-177 functions as the Proton acceptor in the catalytic mechanism. Met-227 contributes to the NAD(+) binding site.

Belongs to the LDH/MDH superfamily. MDH type 1 family. Homodimer.

It carries out the reaction (S)-malate + NAD(+) = oxaloacetate + NADH + H(+). In terms of biological role, catalyzes the reversible oxidation of malate to oxaloacetate. The protein is Malate dehydrogenase of Colwellia psychrerythraea (strain 34H / ATCC BAA-681) (Vibrio psychroerythus).